We begin with the raw amino-acid sequence, 544 residues long: Protein adenylyltransferase (544 aa).

Residues 63–216 enclose the Fido domain; that stretch reads FDTAYLCHIH…LEPMQHLFED (154 aa). Residues 93-94, 106-107, 163-167, and R170 contribute to the ATP site; these read FA, RT, and EGNGR.

It is found in the secreted. It carries out the reaction L-tyrosyl-[protein] + ATP = O-(5'-adenylyl)-L-tyrosyl-[protein] + diphosphate. The enzyme catalyses L-threonyl-[protein] + ATP = 3-O-(5'-adenylyl)-L-threonyl-[protein] + diphosphate. Adenylyltransferase involved in virulence by mediating the addition of adenosine 5'-monophosphate (AMP) to specific residue of host target proteins. In Bartonella henselae (strain ATCC 49882 / DSM 28221 / CCUG 30454 / Houston 1) (Rochalimaea henselae), this protein is Protein adenylyltransferase (bepA).